The following is a 438-amino-acid chain: Keratin, type I cytoskeletal 18 (438 aa).

The head stretch occupies residues 4–83 (AVSSRSTVVS…TLSGNAVISN (80 aa)). The coil 1A stretch occupies residues 84 to 119 (EKETMQDLNDRLSNYLETVRRLENANQQLEIQIREA). Positions 84 to 395 (EKETMQDLND…HLLGGEDSDT (312 aa)) constitute an IF rod domain. Residues 120-136 (MEKRGPSVRDYSNYEKI) form a linker 1 region. The segment at 137–228 (IKELRDQIYD…KNHEDEVIAL (92 aa)) is coil 1B. The linker 12 stretch occupies residues 229-252 (RNQVNSCGVQVDLDAPKGTDLAEI). The segment at 253–393 (MATLRAEYEA…YRHLLGGEDS (141 aa)) is coil 2. Residues 394 to 438 (DTLSLQDALSAMKVSNVQTVQKIVVTTQKLVDGKVVEDSTVTETK) are tail.

Belongs to the intermediate filament family. Heterotetramer of two type I and two type II keratins. Keratin-18 associates with keratin-8. In terms of processing, phosphorylated. Post-translationally, proteolytically cleaved by caspases during epithelial cell apoptosis. In terms of tissue distribution, expressed at low levels in skin.

Functionally, when phosphorylated, plays a role in filament reorganization. The chain is Keratin, type I cytoskeletal 18 from Protopterus aethiopicus (Marbled lungfish).